The sequence spans 252 residues: Small ribosomal subunit protein eS4 (252 aa).

Residues 43–106 (LPLLILVRDM…NKYYRVIPVP (64 aa)) enclose the S4 RNA-binding domain.

This sequence belongs to the eukaryotic ribosomal protein eS4 family.

This chain is Small ribosomal subunit protein eS4, found in Desulfurococcus amylolyticus (strain DSM 18924 / JCM 16383 / VKM B-2413 / 1221n) (Desulfurococcus kamchatkensis).